A 493-amino-acid polypeptide reads, in one-letter code: Cell division protein FtsA (493 aa).

Residues 434–468 (AHQSNPTPHIHSSPTERNLSDLKTPSAPLNTAKND) are disordered. Over residues 436 to 465 (QSNPTPHIHSSPTERNLSDLKTPSAPLNTA) the composition is skewed to polar residues.

It belongs to the FtsA/MreB family. In terms of assembly, self-interacts. Interacts with FtsZ.

Its subcellular location is the cell inner membrane. Cell division protein that is involved in the assembly of the Z ring. May serve as a membrane anchor for the Z ring. The sequence is that of Cell division protein FtsA from Helicobacter pylori (strain J99 / ATCC 700824) (Campylobacter pylori J99).